The sequence spans 398 residues: Enolase (398 aa).

(2R)-2-phosphoglycerate is bound at residue Q154. E196 functions as the Proton donor in the catalytic mechanism. 3 residues coordinate Mg(2+): D232, E273, and D300. 4 residues coordinate (2R)-2-phosphoglycerate: K325, R354, S355, and K376. Catalysis depends on K325, which acts as the Proton acceptor.

This sequence belongs to the enolase family. Mg(2+) serves as cofactor.

The protein resides in the cytoplasm. It is found in the secreted. The protein localises to the cell surface. It carries out the reaction (2R)-2-phosphoglycerate = phosphoenolpyruvate + H2O. It functions in the pathway carbohydrate degradation; glycolysis; pyruvate from D-glyceraldehyde 3-phosphate: step 4/5. Catalyzes the reversible conversion of 2-phosphoglycerate (2-PG) into phosphoenolpyruvate (PEP). It is essential for the degradation of carbohydrates via glycolysis. In Natronomonas pharaonis (strain ATCC 35678 / DSM 2160 / CIP 103997 / JCM 8858 / NBRC 14720 / NCIMB 2260 / Gabara) (Halobacterium pharaonis), this protein is Enolase.